Here is a 231-residue protein sequence, read N- to C-terminus: Orotidine 5'-phosphate decarboxylase (231 aa).

Substrate is bound by residues aspartate 11, lysine 34, 61 to 70 (DLKLHDIPNT), threonine 117, arginine 179, glutamine 188, glycine 208, and arginine 209. Lysine 63 acts as the Proton donor in catalysis.

The protein belongs to the OMP decarboxylase family. Type 1 subfamily. In terms of assembly, homodimer.

It carries out the reaction orotidine 5'-phosphate + H(+) = UMP + CO2. Its pathway is pyrimidine metabolism; UMP biosynthesis via de novo pathway; UMP from orotate: step 2/2. Functionally, catalyzes the decarboxylation of orotidine 5'-monophosphate (OMP) to uridine 5'-monophosphate (UMP). The protein is Orotidine 5'-phosphate decarboxylase of Streptococcus thermophilus (strain ATCC BAA-491 / LMD-9).